Consider the following 490-residue polypeptide: Tektin-3 (490 aa).

Residues threonine 7, threonine 9, and threonine 11 are each glycosylated (O-linked (GalNAc...) threonine). N-linked (GlcNAc...) asparagine glycosylation is found at asparagine 41, asparagine 86, asparagine 111, and asparagine 276. The stretch at 415–461 forms a coiled coil; sequence MAQLRLVNEVYEVDETIQTLQQRLRDSEDTLQSLAHTKATLEHDLAV.

The protein belongs to the tektin family. As to quaternary structure, microtubule inner protein component of sperm flagellar doublet microtubules. Interacts with TEKT1, TEKT2, TEKT4 and TEKT5. Interacts with CCDC38. N- and O-glycosylated. Post-translationally, ubiquitinated, leading to its degradation. Deubiquitinated by USP16, promoting its stability. In terms of processing, may be proteolytically processed during the epididymal transit of spermatozoa. In terms of tissue distribution, expressed preferentially in testis. Expressed predominantly in late pachytene spermatocytes and early round spermatids. Expressed in spermatozoa.

It is found in the cytoplasm. It localises to the cytoskeleton. The protein localises to the cilium axoneme. The protein resides in the flagellum axoneme. Its subcellular location is the cytoplasmic vesicle. It is found in the secretory vesicle. It localises to the acrosome outer membrane. Microtubule inner protein (MIP) part of the dynein-decorated doublet microtubules (DMTs) in cilia and flagellar axoneme. Forms filamentous polymers in the walls of ciliary and flagellar microtubules. Required for normal sperm mobility. The chain is Tektin-3 (Tekt3) from Mus musculus (Mouse).